The following is a 1322-amino-acid chain: FERM and PDZ domain-containing protein 4 (1322 aa).

One can recognise a WW domain in the interval 33-66 (QVPPYGWEMTANRDGRDYFINHMTQAIPFDDPRL). Positions 78–155 (KVEMRRDPVL…SILLTVIQPY (78 aa)) constitute a PDZ domain. The region spanning 204–519 (NVLKVYLENG…GYYRLLVDSR (316 aa)) is the FERM domain. Disordered regions lie at residues 809-847 (APPP…EIPV), 900-927 (SPES…TAQK), 952-983 (EFPA…PPKV), 1027-1080 (RKSK…STFN), 1105-1148 (SGLE…GQGD), 1160-1180 (AKDL…PSKL), and 1207-1227 (HFSL…TGSS). Residues 902–921 (ESSSDSGNETNSSEMTESSE) show a composition bias toward low complexity. Positions 1041–1054 (NGNTTGKKQQGTKT) are enriched in low complexity. Polar residues predominate over residues 1067 to 1080 (TVSSRDSQHLSTFN). A compositionally biased stretch (polar residues) spans 1207-1217 (HFSLQSSQGSS).

In terms of assembly, interacts (via C-terminus) with DLG1, DLG2, DLG3 and DLG4/PSD95. Interacts (via N-terminus) with ARHGEF7; the interaction is mediated by the PDZ domain. Interacts with GPSM2 (via TPR repeat region).

The protein localises to the cell projection. It localises to the dendritic spine. In terms of biological role, positive regulator of dendritic spine morphogenesis and density. Required for the maintenance of excitatory synaptic transmission. Binds phosphatidylinositol 4,5-bisphosphate. The chain is FERM and PDZ domain-containing protein 4 (FRMPD4) from Homo sapiens (Human).